The primary structure comprises 177 residues: Ribosome rescue factor SmrB (177 aa).

Residues 22 to 45 (SKKLRQDTIIHQPSKNFSEQQKQR) are disordered. Residues 30–41 (IIHQPSKNFSEQ) show a composition bias toward polar residues. Residues 98 to 173 (LDMHGMKQDE…GAGAILVLLS (76 aa)) enclose the Smr domain.

It belongs to the SmrB family. In terms of assembly, associates with collided ribosomes, but not with correctly translating polysomes.

Acts as a ribosome collision sensor. Detects stalled/collided disomes (pairs of ribosomes where the leading ribosome is stalled and a second ribosome has collided with it) and endonucleolytically cleaves mRNA at the 5' boundary of the stalled ribosome. Stalled/collided disomes form a new interface (primarily via the 30S subunits) that binds SmrB. Cleaved mRNA becomes available for tmRNA ligation, leading to ribosomal subunit dissociation and rescue of stalled ribosomes. The protein is Ribosome rescue factor SmrB of Aliivibrio salmonicida (strain LFI1238) (Vibrio salmonicida (strain LFI1238)).